The primary structure comprises 383 residues: tRNA-specific 2-thiouridylase MnmA (383 aa).

Residues 6-13 and Leu32 each bind ATP; that span reads AMSGGVDS. The Nucleophile role is filled by Cys101. A disulfide bridge connects residues Cys101 and Cys199. An ATP-binding site is contributed by Gly125. The tract at residues 148–150 is interaction with tRNA; sequence KDQ. The Cysteine persulfide intermediate role is filled by Cys199.

It belongs to the MnmA/TRMU family.

The protein resides in the cytoplasm. The enzyme catalyses S-sulfanyl-L-cysteinyl-[protein] + uridine(34) in tRNA + AH2 + ATP = 2-thiouridine(34) in tRNA + L-cysteinyl-[protein] + A + AMP + diphosphate + H(+). Functionally, catalyzes the 2-thiolation of uridine at the wobble position (U34) of tRNA, leading to the formation of s(2)U34. The protein is tRNA-specific 2-thiouridylase MnmA of Kocuria rhizophila (strain ATCC 9341 / DSM 348 / NBRC 103217 / DC2201).